Consider the following 479-residue polypeptide: Glutamyl-tRNA reductase (479 aa).

Substrate contacts are provided by residues 49-52 (TCNR), serine 109, 114-116 (EQQ), and glutamine 120. The active-site Nucleophile is cysteine 50. Residue 191-196 (GAGSMG) coordinates NADP(+).

Belongs to the glutamyl-tRNA reductase family. In terms of assembly, homodimer.

The catalysed reaction is (S)-4-amino-5-oxopentanoate + tRNA(Glu) + NADP(+) = L-glutamyl-tRNA(Glu) + NADPH + H(+). It functions in the pathway porphyrin-containing compound metabolism; protoporphyrin-IX biosynthesis; 5-aminolevulinate from L-glutamyl-tRNA(Glu): step 1/2. Its function is as follows. Catalyzes the NADPH-dependent reduction of glutamyl-tRNA(Glu) to glutamate 1-semialdehyde (GSA). This Rhodococcus jostii (strain RHA1) protein is Glutamyl-tRNA reductase.